Reading from the N-terminus, the 240-residue chain is Lipoprotein signal peptidase (240 aa).

4 consecutive transmembrane segments (helical) span residues 38-58 (LIWK…TSFL), 73-93 (LIPG…FGTL), 98-118 (PSLV…VLLF), and 120-140 (SNYL…SNII). Catalysis depends on residues D162 and D179. The chain crosses the membrane as a helical span at residues 177–197 (FPDTFVIIGMIFVGIQIIISF).

Belongs to the peptidase A8 family.

The protein resides in the cell membrane. It catalyses the reaction Release of signal peptides from bacterial membrane prolipoproteins. Hydrolyzes -Xaa-Yaa-Zaa-|-(S,diacylglyceryl)Cys-, in which Xaa is hydrophobic (preferably Leu), and Yaa (Ala or Ser) and Zaa (Gly or Ala) have small, neutral side chains.. It functions in the pathway protein modification; lipoprotein biosynthesis (signal peptide cleavage). In terms of biological role, this protein specifically catalyzes the removal of signal peptides from prolipoproteins. The polypeptide is Lipoprotein signal peptidase (Malacoplasma penetrans (strain HF-2) (Mycoplasma penetrans)).